Consider the following 85-residue polypeptide: uncharacterized protein (85 aa).

Its subcellular location is the mitochondrion. This is an uncharacterized protein from Paramecium tetraurelia.